Here is a 99-residue protein sequence, read N- to C-terminus: Integration host factor subunit alpha (99 aa).

The interval 49–75 (FGNFDLRDKNQRPGRNPKTGEDIPITA) is disordered.

Belongs to the bacterial histone-like protein family. As to quaternary structure, heterodimer of an alpha and a beta chain.

Functionally, this protein is one of the two subunits of integration host factor, a specific DNA-binding protein that functions in genetic recombination as well as in transcriptional and translational control. This is Integration host factor subunit alpha from Salmonella arizonae (strain ATCC BAA-731 / CDC346-86 / RSK2980).